The primary structure comprises 236 residues: Alanyl-tRNA editing protein AlaX-M (236 aa).

Residues His-101, His-105, and His-205 each coordinate Zn(2+).

Belongs to the class-II aminoacyl-tRNA synthetase family. Editing domain AlaX-M subfamily. The cofactor is Zn(2+).

It is found in the cytoplasm. Its function is as follows. Functions in trans to edit the amino acid moiety from incorrectly charged Ser-tRNA(Ala). This Saccharolobus solfataricus (strain ATCC 35092 / DSM 1617 / JCM 11322 / P2) (Sulfolobus solfataricus) protein is Alanyl-tRNA editing protein AlaX-M (alaXM).